Reading from the N-terminus, the 290-residue chain is uncharacterized protein (290 aa).

The region spanning 30 to 274 is the AB hydrolase-1 domain; the sequence is PTILLLHGFP…YDTGHFALET (245 aa). H269 is a catalytic residue.

Belongs to the DmpD/TodF/XylF esterase family.

This is an uncharacterized protein from Saccharomyces cerevisiae (strain ATCC 204508 / S288c) (Baker's yeast).